A 510-amino-acid chain; its full sequence is ATP synthase subunit alpha, mitochondrial (510 aa).

171-178 (GDRQTGKT) lines the ATP pocket.

In terms of assembly, F-type ATP synthases have 2 components, the catalytic core F(1) and the membrane-embedded component F(0), linked together by a central stalk and a peripheral stalk. The central stalk, also called rotor shaft, is often seen as part of F(1). The peripheral stalk is seen as part of F(0). F(0) contains the membrane channel next to the rotor. F-type ATP synthases form dimers but each monomer functions independently in ATP generation. The dimer consists of 18 different polypeptides: ATP1 (subunit alpha, part of F(1), 3 molecules per monomer), ATP2 (subunit beta, part of F(1), 3 molecules per monomer), ATP3 (subunit gamma, part of the central stalk), ATP4 (subunit b, part of the peripheral stalk), ATP5/OSCP (subunit 5/OSCP, part of the peripheral stalk), ATP6 (subunit a, part of the peripheral stalk), ATP7 (subunit d, part of the peripheral stalk), ATP8 (subunit 8, part of the peripheral stalk), OLI1 (subunit c, part of the rotor, 10 molecules per monomer), ATP14 (subunit h, part of the peripheral stalk), ATP15 (subunit epsilon, part of the central stalk), ATP16 (subunit delta, part of the central stalk), ATP17 (subunit f, part of the peripheral stalk), ATP18 (subunit i/j, part of the peripheral stalk). Dimer-specific subunits are ATP19 (subunit k, at interface between monomers), ATP20 (subunit g, at interface between monomers), TIM11 (subunit e, at interface between monomers). Also contains subunit L.

It localises to the mitochondrion inner membrane. Functionally, mitochondrial membrane ATP synthase (F(1)F(0) ATP synthase or Complex V) produces ATP from ADP in the presence of a proton gradient across the membrane which is generated by electron transport complexes of the respiratory chain. F-type ATP synthases consist of two structural domains, F(1) - containing the extramembraneous catalytic core, and F(0) - containing the membrane proton channel, linked together by a central stalk and a peripheral stalk. During catalysis, ATP synthesis in the catalytic domain of F(1) is coupled via a rotary mechanism of the central stalk subunits to proton translocation. Subunits alpha/ATP1 and beta/ATP2 form the catalytic core in F(1). Rotation of the central stalk against the surrounding alpha/ATP1(3)beta/ATP2(3) subunits leads to hydrolysis of ATP in three separate catalytic sites on the beta/ATP2 subunits. Subunit alpha/ATP1 does not bear the catalytic high-affinity ATP-binding sites. The polypeptide is ATP synthase subunit alpha, mitochondrial (Pichia angusta (Yeast)).